The following is a 57-amino-acid chain: Benzylsuccinate synthase gamma subunit (57 aa).

Heterohexamer composed of 2 alpha subunits, 2 beta subunits and 2 gamma subunits.

The catalysed reaction is toluene + fumarate = 2-benzylsuccinate. It functions in the pathway xenobiotic degradation; toluene degradation. Its activity is regulated as follows. Activated by the benzylsuccinate synthase activating enzyme BssD. Rapidly inactivated by oxygen. Catalyzes the addition of fumarate to the methyl group of toluene, leading to the formation of benzylsuccinate. The polypeptide is Benzylsuccinate synthase gamma subunit (bssC) (Thauera aromatica).